Reading from the N-terminus, the 302-residue chain is Glycine--tRNA ligase alpha subunit (302 aa).

It belongs to the class-II aminoacyl-tRNA synthetase family. Tetramer of two alpha and two beta subunits.

Its subcellular location is the cytoplasm. It carries out the reaction tRNA(Gly) + glycine + ATP = glycyl-tRNA(Gly) + AMP + diphosphate. In Baumannia cicadellinicola subsp. Homalodisca coagulata, this protein is Glycine--tRNA ligase alpha subunit.